The primary structure comprises 117 residues: UPF0127 protein PYRAB11210 (117 aa).

It belongs to the UPF0127 family.

In Pyrococcus abyssi (strain GE5 / Orsay), this protein is UPF0127 protein PYRAB11210.